A 433-amino-acid polypeptide reads, in one-letter code: Tol-Pal system protein TolB (433 aa).

The N-terminal stretch at M1–A21 is a signal peptide.

Belongs to the TolB family. In terms of assembly, the Tol-Pal system is composed of five core proteins: the inner membrane proteins TolA, TolQ and TolR, the periplasmic protein TolB and the outer membrane protein Pal. They form a network linking the inner and outer membranes and the peptidoglycan layer.

It localises to the periplasm. Part of the Tol-Pal system, which plays a role in outer membrane invagination during cell division and is important for maintaining outer membrane integrity. The protein is Tol-Pal system protein TolB of Pseudomonas fluorescens (strain ATCC BAA-477 / NRRL B-23932 / Pf-5).